The chain runs to 730 residues: Sodium-dependent neutral amino acid transporter B(0)AT2 (730 aa).

Positions 1 to 24 (MPKNSKVVKRELDDDVTESVKDLL) are disordered. The Extracellular portion of the chain corresponds to 1–70 (MPKNSKVVKR…RPAWSSKLQY (70 aa)). Phosphoserine occurs at positions 25 and 55. Helical transmembrane passes span 71 to 91 (ILAQVGFSVGLGNVWRFPYLC), 97 to 117 (GAYLLPYLILLMVIGIPLFFL), and 149 to 169 (VVCYFVALYYNVIIGWSLFYF). Residues 170–223 (SQSFQQPLPWDQCPLVKNASHTFVEPECEQSSATTYYWYREALNISSSISESGG) lie on the Cytoplasmic side of the membrane. Helical transmembrane passes span 224 to 244 (LNWKMTICLLAAWVMVCLAMI) and 253 to 273 (IIYFSSLFPYVVLICFLIRAL). Residue Asn276 is glycosylated (N-linked (GlcNAc...) asparagine). 2 helical membrane passes run 302-322 (AATQVFFALGLGFGGVIAFSS) and 335-355 (VLVSFINFFTSVLATLVVFAV). Over 356-458 (LGFKANVINE…AMTHFPASPF (103 aa)) the chain is Cytoplasmic. Transmembrane regions (helical) follow at residues 459 to 479 (WSVMFFLMLVNLGLGSMFGTI), 494 to 514 (KEILTVICCLLAFCIGLIFVQ), 530 to 550 (TLPLLIVVILENIAVCFVYGI), 575 to 595 (YVSPLMLLSLLIASVVNMGLS), and 619 to 639 (LVVCVSLVVFAVLPVPVVFIV). The Extracellular portion of the chain corresponds to 640 to 730 (RRFNLIDDSS…IMPDMPESDL (91 aa)). Phosphoserine is present on residues Ser687, Ser699, and Ser701.

The protein belongs to the sodium:neurotransmitter symporter (SNF) (TC 2.A.22) family. SLC6A15 subfamily.

The protein resides in the membrane. It carries out the reaction L-leucine(in) + Na(+)(in) = L-leucine(out) + Na(+)(out). It catalyses the reaction L-isoleucine(in) + Na(+)(in) = L-isoleucine(out) + Na(+)(out). The enzyme catalyses L-methionine(in) + Na(+)(in) = L-methionine(out) + Na(+)(out). The catalysed reaction is L-proline(in) + Na(+)(in) = L-proline(out) + Na(+)(out). It carries out the reaction L-alanine(in) + Na(+)(in) = L-alanine(out) + Na(+)(out). It catalyses the reaction L-asparagine(in) + Na(+)(in) = L-asparagine(out) + Na(+)(out). The enzyme catalyses L-valine(in) + Na(+)(in) = L-valine(out) + Na(+)(out). The catalysed reaction is L-cysteine(in) + Na(+)(in) = L-cysteine(out) + Na(+)(out). It carries out the reaction L-glutamine(in) + Na(+)(in) = L-glutamine(out) + Na(+)(out). It catalyses the reaction L-serine(in) + Na(+)(in) = L-serine(out) + Na(+)(out). The enzyme catalyses L-threonine(in) + Na(+)(in) = L-threonine(out) + Na(+)(out). The catalysed reaction is L-pipecolate(in) + Na(+)(in) = L-pipecolate(out) + Na(+)(out). It carries out the reaction L-phenylalanine(in) + Na(+)(in) = L-phenylalanine(out) + Na(+)(out). In terms of biological role, functions as a sodium-dependent neutral amino acid transporter. Exhibits preference for the branched-chain amino acids, particularly leucine, valine and isoleucine and methionine. Can also transport low-affinity substrates such as alanine, phenylalanine, glutamine and pipecolic acid. Mediates the saturable, pH-sensitive and electrogenic cotransport of proline and sodium ions with a stoichiometry of 1:1. May have a role as transporter for neurotransmitter precursors into neurons. In contrast to other members of the neurotransmitter transporter family, does not appear to be chloride-dependent. In Pongo abelii (Sumatran orangutan), this protein is Sodium-dependent neutral amino acid transporter B(0)AT2 (SLC6A15).